A 293-amino-acid chain; its full sequence is Homoserine kinase (293 aa).

83–93 (PITRGMGSSSA) contributes to the ATP binding site.

Belongs to the GHMP kinase family. Homoserine kinase subfamily.

The protein localises to the cytoplasm. The enzyme catalyses L-homoserine + ATP = O-phospho-L-homoserine + ADP + H(+). Its pathway is amino-acid biosynthesis; L-threonine biosynthesis; L-threonine from L-aspartate: step 4/5. Its function is as follows. Catalyzes the ATP-dependent phosphorylation of L-homoserine to L-homoserine phosphate. This Helicobacter pylori (strain J99 / ATCC 700824) (Campylobacter pylori J99) protein is Homoserine kinase.